Here is a 559-residue protein sequence, read N- to C-terminus: Urocanate hydratase (559 aa).

Residues 54 to 55, Gln-132, 178 to 180, Glu-198, Arg-203, 244 to 245, 265 to 269, 275 to 276, and Tyr-324 contribute to the NAD(+) site; these read GG, GMG, NA, QTSAH, and YL. Cys-412 is a catalytic residue. Position 494 (Gly-494) interacts with NAD(+).

Belongs to the urocanase family. The cofactor is NAD(+).

The protein localises to the cytoplasm. The enzyme catalyses 4-imidazolone-5-propanoate = trans-urocanate + H2O. It participates in amino-acid degradation; L-histidine degradation into L-glutamate; N-formimidoyl-L-glutamate from L-histidine: step 2/3. Catalyzes the conversion of urocanate to 4-imidazolone-5-propionate. The protein is Urocanate hydratase of Photorhabdus laumondii subsp. laumondii (strain DSM 15139 / CIP 105565 / TT01) (Photorhabdus luminescens subsp. laumondii).